The chain runs to 370 residues: Coproporphyrin III ferrochelatase (370 aa).

Fe-coproporphyrin III-binding residues include serine 58 and tyrosine 127. 2 residues coordinate Fe(2+): histidine 189 and glutamate 276.

It belongs to the ferrochelatase family.

It is found in the cytoplasm. The catalysed reaction is Fe-coproporphyrin III + 2 H(+) = coproporphyrin III + Fe(2+). It participates in porphyrin-containing compound metabolism; protoheme biosynthesis. Involved in coproporphyrin-dependent heme b biosynthesis. Catalyzes the insertion of ferrous iron into coproporphyrin III to form Fe-coproporphyrin III. The polypeptide is Coproporphyrin III ferrochelatase (Corynebacterium glutamicum (strain R)).